Here is a 443-residue protein sequence, read N- to C-terminus: NADH-quinone oxidoreductase subunit D 1 (443 aa).

This sequence belongs to the complex I 49 kDa subunit family. In terms of assembly, NDH-1 is composed of 14 different subunits. Subunits NuoB, C, D, E, F, and G constitute the peripheral sector of the complex.

Its subcellular location is the cell membrane. It catalyses the reaction a quinone + NADH + 5 H(+)(in) = a quinol + NAD(+) + 4 H(+)(out). Its function is as follows. NDH-1 shuttles electrons from NADH, via FMN and iron-sulfur (Fe-S) centers, to quinones in the respiratory chain. The immediate electron acceptor for the enzyme in this species is believed to be a menaquinone. Couples the redox reaction to proton translocation (for every two electrons transferred, four hydrogen ions are translocated across the cytoplasmic membrane), and thus conserves the redox energy in a proton gradient. The polypeptide is NADH-quinone oxidoreductase subunit D 1 (Streptomyces avermitilis (strain ATCC 31267 / DSM 46492 / JCM 5070 / NBRC 14893 / NCIMB 12804 / NRRL 8165 / MA-4680)).